We begin with the raw amino-acid sequence, 144 residues long: Transcriptional regulator MraZ (144 aa).

SpoVT-AbrB domains lie at 5–47 and 77–120; these read TYTP…PRAE and TDEQ…DAQA.

The protein belongs to the MraZ family. In terms of assembly, forms oligomers.

The protein resides in the cytoplasm. Its subcellular location is the nucleoid. This Mycolicibacterium vanbaalenii (strain DSM 7251 / JCM 13017 / BCRC 16820 / KCTC 9966 / NRRL B-24157 / PYR-1) (Mycobacterium vanbaalenii) protein is Transcriptional regulator MraZ.